Here is a 782-residue protein sequence, read N- to C-terminus: Protein PAT1 homolog 1 (782 aa).

Disordered regions lie at residues 96-153 (GPKH…HSKP), 177-217 (LPES…YSAP), 332-372 (VREH…SKHM), and 460-481 (EVDS…GKHL). The segment covering 108 to 117 (SGSFSRESSS) has biased composition (low complexity). Residues 208–217 (GGSQLTYSAP) show a composition bias toward polar residues. Residues 335–347 (HKHKSSHRSRKNR) are compositionally biased toward basic residues. Polar residues predominate over residues 348-366 (GLSQQTSDAASQKSETGLQ). Basic and acidic residues predominate over residues 471 to 481 (SGDHKGSGKHL).

Interacts with AFPH2/NINJA. In terms of tissue distribution, expressed in root vasculature, shoot apical meristem (SAM) and leaves.

Its function is as follows. Activator of mRNA decapping. Involved in mRNA decay via decapping. Involved in the regulation of root stem cell niche identity. Maintains root stem cell niche stability through the interaction with the negative regulator of jasmonate signaling AFPH2/NINJA, and the regulation of cell division. The protein is Protein PAT1 homolog 1 of Arabidopsis thaliana (Mouse-ear cress).